The chain runs to 86 residues: Neurotoxin-like protein pMD18-NTL3 (86 aa).

The first 21 residues, 1-21 (MKTLLLTLVVLTIACLDLGYT), serve as a signal peptide directing secretion. Disulfide bonds link cysteine 24–cysteine 45, cysteine 38–cysteine 62, cysteine 66–cysteine 78, and cysteine 79–cysteine 84.

This sequence belongs to the three-finger toxin family. Short-chain subfamily. Orphan group IX sub-subfamily. As to expression, expressed by the venom gland.

The protein localises to the secreted. This Bungarus multicinctus (Many-banded krait) protein is Neurotoxin-like protein pMD18-NTL3.